Here is a 336-residue protein sequence, read N- to C-terminus: Ornithine carbamoyltransferase, catabolic (336 aa).

Carbamoyl phosphate-binding positions include 57-60 (STRT), Gln-84, Arg-108, and 136-139 (HPTQ). L-ornithine-binding positions include Asn-169, Asp-233, and 237–238 (SM). Residues 275 to 276 (CL) and Arg-322 contribute to the carbamoyl phosphate site.

Belongs to the aspartate/ornithine carbamoyltransferase superfamily. OTCase family.

It localises to the cytoplasm. It catalyses the reaction carbamoyl phosphate + L-ornithine = L-citrulline + phosphate + H(+). The protein operates within amino-acid degradation; L-arginine degradation via ADI pathway; carbamoyl phosphate from L-arginine: step 2/2. Functionally, reversibly catalyzes the transfer of the carbamoyl group from carbamoyl phosphate (CP) to the N(epsilon) atom of ornithine (ORN) to produce L-citrulline. The sequence is that of Ornithine carbamoyltransferase, catabolic from Chromobacterium violaceum (strain ATCC 12472 / DSM 30191 / JCM 1249 / CCUG 213 / NBRC 12614 / NCIMB 9131 / NCTC 9757 / MK).